Reading from the N-terminus, the 331-residue chain is 7,8-didemethyl-8-hydroxy-5-deazariboflavin synthase (331 aa).

One can recognise a Radical SAM core domain in the interval 6–244 (ITFSKNAFLP…ADVAVQIPPN (239 aa)). [4Fe-4S] cluster is bound by residues C20, C24, and C27.

The protein belongs to the radical SAM superfamily. CofG family. Consists of two subunits, CofG and CofH. The cofactor is [4Fe-4S] cluster.

The catalysed reaction is 5-amino-5-(4-hydroxybenzyl)-6-(D-ribitylimino)-5,6-dihydrouracil + S-adenosyl-L-methionine = 7,8-didemethyl-8-hydroxy-5-deazariboflavin + 5'-deoxyadenosine + L-methionine + NH4(+) + H(+). Its pathway is cofactor biosynthesis; coenzyme F0 biosynthesis. Catalyzes the radical-mediated synthesis of 7,8-didemethyl-8-hydroxy-5-deazariboflavin from 5-amino-5-(4-hydroxybenzyl)-6-(D-ribitylimino)-5,6-dihydrouracil. This Methanoculleus marisnigri (strain ATCC 35101 / DSM 1498 / JR1) protein is 7,8-didemethyl-8-hydroxy-5-deazariboflavin synthase.